A 31-amino-acid chain; its full sequence is Cycloviolacin-O6 (31 aa).

The cyclopeptide (Gly-Asn) cross-link spans 1-31 (GTLPCGESCVWIPCISAAVGCSCKSKVCYKN). 3 disulfides stabilise this stretch: Cys-5–Cys-21, Cys-9–Cys-23, and Cys-14–Cys-28.

Post-translationally, this is a cyclic peptide.

Functionally, probably participates in a plant defense mechanism. The polypeptide is Cycloviolacin-O6 (Viola odorata (Sweet violet)).